The primary structure comprises 413 residues: 1-deoxy-D-xylulose 5-phosphate reductoisomerase (413 aa).

NADPH-binding residues include T13, G14, S15, I16, K40, N41, and N127. 1-deoxy-D-xylulose 5-phosphate is bound at residue K128. Residue E129 coordinates NADPH. D153 is a Mn(2+) binding site. S154, E155, S184, and H207 together coordinate 1-deoxy-D-xylulose 5-phosphate. E155 serves as a coordination point for Mn(2+). G213 provides a ligand contact to NADPH. 4 residues coordinate 1-deoxy-D-xylulose 5-phosphate: S220, N225, K226, and E229. Mn(2+) is bound at residue E229.

This sequence belongs to the DXR family. Requires Mg(2+) as cofactor. Mn(2+) serves as cofactor.

The enzyme catalyses 2-C-methyl-D-erythritol 4-phosphate + NADP(+) = 1-deoxy-D-xylulose 5-phosphate + NADPH + H(+). It participates in isoprenoid biosynthesis; isopentenyl diphosphate biosynthesis via DXP pathway; isopentenyl diphosphate from 1-deoxy-D-xylulose 5-phosphate: step 1/6. Catalyzes the NADPH-dependent rearrangement and reduction of 1-deoxy-D-xylulose-5-phosphate (DXP) to 2-C-methyl-D-erythritol 4-phosphate (MEP). This is 1-deoxy-D-xylulose 5-phosphate reductoisomerase from Nitrosomonas eutropha (strain DSM 101675 / C91 / Nm57).